A 224-amino-acid polypeptide reads, in one-letter code: Prothoracicotropic hormone (224 aa).

The N-terminal stretch at 1–29 is a signal peptide; that stretch reads MITRPIILVILCYAILMIVQSFVPKAVAL. 3 disulfide bridges follow: Cys132-Cys169, Cys155-Cys211, and Cys163-Cys213. N-linked (GlcNAc...) asparagine glycosylation is present at Asn156.

In terms of assembly, homodimer; disulfide-linked. As to expression, PTTH is synthesized by two dorsolateral neurosecretory cells of the Bombyx brain.

In terms of biological role, PTTH is a brain secretory polypeptide of insects which stimulates the prothoracic glands to produce and release ecdysone, the steroid essential to insect development. Peptides P2K and P6K are presumed to be cleaved post-translationally and may play some unknown physiologically or developmentally important functions. The protein is Prothoracicotropic hormone of Bombyx mori (Silk moth).